The sequence spans 91 residues: Potassium channel toxin BuTXK-beta (91 aa).

The N-terminal stretch at 1-20 (MQRNLVVLLLLGMVALSSCG) is a signal peptide. A propeptide spanning residues 21–27 (LREKHFQ) is cleaved from the precursor. In terms of domain architecture, BetaSPN-type CS-alpha/beta spans 54-91 (QFGCPAYQGYCDDHCQDIKKEEGFCHGMKCKCGIPMGF). 3 disulfides stabilise this stretch: C57–C78, C64–C83, and C68–C85.

Belongs to the long chain scorpion toxin family. Class 1 subfamily. In terms of tissue distribution, expressed by the venom gland.

It is found in the secreted. Inhibits voltage-gated potassium channel. The polypeptide is Potassium channel toxin BuTXK-beta (Buthus israelis (Israeli scorpion)).